Consider the following 465-residue polypeptide: Ras-like GTPase YcjX (465 aa).

The Walker A motif signature appears at Gly26–Thr33. Residues Ser28, Gly31, Lys32, Thr33, Ala34, Trp95, Thr99, and Arg100 each contribute to the GTP site. Residues Gly31, Lys32, Thr33, Ala34, Trp95, and Thr99 each coordinate GDP. An N6-acetyllysine modification is found at Lys249. 4 residues coordinate GTP: Lys338, Asp340, His341, and Val380. The GDP site is built by Lys338, Asp340, His341, and Val380.

This sequence to H.influenzae HI_1637. Monomer in solution. Requires Mg(2+) as cofactor.

The enzyme catalyses GTP + H2O = GDP + phosphate + H(+). Its activity is regulated as follows. Alternates between an inactive form bound to GDP and an active form bound to GTP. Likely activated by a guanine nucleotide-exchange factor (GEF). Binds GTP and GDP. Has intrinsic GTPase activity. Does not hydrolyze ATP. May act as a transducer of stress responses. This chain is Ras-like GTPase YcjX (ycjX), found in Escherichia coli (strain K12).